The sequence spans 715 residues: MFDEVKKSIQWGQETLTLETGKVARQADGSVIATLGETSVMANVTFAKEPKPGQDFFPLTVHYQEKYYAAGKIPGGFFKREARPSEKETLTARLIDRPIRPLFVPGFKHEVLVMCTVLSHDLVNDPDIVAMIAASAALTISGVPFMGPIAAARVGFADGEYVLNPEVQDMDHLRLNPEQRLDLVVAGTRDAVMMVESEAYELTEAEMLGAVKFGHEAMQPVIDLIIDLAEAAAKEPFEFASPDYSALYARVKSLGEADMRAAYAIHDKGERRDAIEVAKAKVLAGLSEEELLDPNLGSALKKLESGILRGGIIDGRPRIDGRDNKTVRPIDCEVGFLPRTHGSSLFTRGETQALVVTTLGTGDDEQIIDALHGNSRSNFLLHYNFPPYSVGEVGRVGSPGRREIGHGKLAWRALQAVLPAPTDFPYTIRVVSEITESNGSSSMASVCGGSLSMMDAGVPLKAPVAGVAMGLILEEDGRWAVLTDILGDEDHLGDMDFKVAGTENGITSLQMDIKVAGITPEIMEQALAQAKDGRLHILGEMSKALSEGRREFSAHAPRIETMTIPTDKIREVIGSGGKVIREIVETSGAKVDISDDGTIKIASANADSIKKAYDMIYSIVAEPEEGKIYVGKVVKLVDFGAFVNFFGKRDGLVHVSQIAGKRLNHPNEVLKEGQEVKVKLLGFDDRGKVRLGMKMVDQETGEEIAPEKKEETAEG.

Aspartate 490 and aspartate 496 together coordinate Mg(2+). One can recognise a KH domain in the interval 557–616; it reads PRIETMTIPTDKIREVIGSGGKVIREIVETSGAKVDISDDGTIKIASANADSIKKAYDMI. In terms of domain architecture, S1 motif spans 626-694; the sequence is GKIYVGKVVK…DRGKVRLGMK (69 aa).

It belongs to the polyribonucleotide nucleotidyltransferase family. It depends on Mg(2+) as a cofactor.

Its subcellular location is the cytoplasm. It carries out the reaction RNA(n+1) + phosphate = RNA(n) + a ribonucleoside 5'-diphosphate. Its function is as follows. Involved in mRNA degradation. Catalyzes the phosphorolysis of single-stranded polyribonucleotides processively in the 3'- to 5'-direction. In Paracoccus denitrificans (strain Pd 1222), this protein is Polyribonucleotide nucleotidyltransferase.